The primary structure comprises 255 residues: Ribose-5-phosphate isomerase (255 aa).

It belongs to the ribose 5-phosphate isomerase family.

It localises to the cytoplasm. The catalysed reaction is aldehydo-D-ribose 5-phosphate = D-ribulose 5-phosphate. It functions in the pathway carbohydrate degradation; pentose phosphate pathway; D-ribose 5-phosphate from D-ribulose 5-phosphate (non-oxidative stage): step 1/1. The protein is Ribose-5-phosphate isomerase (RKI1) of Eremothecium gossypii (strain ATCC 10895 / CBS 109.51 / FGSC 9923 / NRRL Y-1056) (Yeast).